The following is a 141-amino-acid chain: Hemoglobin subunit alpha (141 aa).

The Globin domain occupies 1–141 (VLSPADKTNV…VSTVLTSKYR (141 aa)). The residue at position 3 (Ser3) is a Phosphoserine. Position 7 is an N6-succinyllysine (Lys7). Phosphothreonine is present on Thr8. An N6-succinyllysine modification is found at Lys11. Lys16 carries the post-translational modification N6-acetyllysine; alternate. Lys16 bears the N6-succinyllysine; alternate mark. At Tyr24 the chain carries Phosphotyrosine. The residue at position 35 (Ser35) is a Phosphoserine. The residue at position 40 (Lys40) is an N6-succinyllysine. A Phosphoserine modification is found at Ser49. His58 is an O2 binding site. A heme b-binding site is contributed by His87. Ser102 bears the Phosphoserine mark. Thr108 is modified (phosphothreonine). Phosphoserine occurs at positions 124 and 131. 2 positions are modified to phosphothreonine: Thr134 and Thr137. The residue at position 138 (Ser138) is a Phosphoserine.

The protein belongs to the globin family. In terms of assembly, heterotetramer of two alpha chains and two beta chains. Red blood cells.

Functionally, involved in oxygen transport from the lung to the various peripheral tissues. In terms of biological role, hemopressin acts as an antagonist peptide of the cannabinoid receptor CNR1. Hemopressin-binding efficiently blocks cannabinoid receptor CNR1 and subsequent signaling. This is Hemoglobin subunit alpha (HBA) from Urocitellus parryii (Arctic ground squirrel).